Consider the following 101-residue polypeptide: NADH-quinone oxidoreductase subunit K (101 aa).

A run of 3 helical transmembrane segments spans residues 5 to 25 (LTHYVVASGILFAIGLAGIIL), 30 to 50 (IVILMCLEIMLNAANLALVAF), and 61 to 81 (VLVFFVITVAAAEVAVGLALI).

It belongs to the complex I subunit 4L family. NDH-1 is composed of 14 different subunits. Subunits NuoA, H, J, K, L, M, N constitute the membrane sector of the complex.

It localises to the cell inner membrane. It catalyses the reaction a quinone + NADH + 5 H(+)(in) = a quinol + NAD(+) + 4 H(+)(out). In terms of biological role, NDH-1 shuttles electrons from NADH, via FMN and iron-sulfur (Fe-S) centers, to quinones in the respiratory chain. The immediate electron acceptor for the enzyme in this species is believed to be ubiquinone. Couples the redox reaction to proton translocation (for every two electrons transferred, four hydrogen ions are translocated across the cytoplasmic membrane), and thus conserves the redox energy in a proton gradient. This Methylacidiphilum infernorum (isolate V4) (Methylokorus infernorum (strain V4)) protein is NADH-quinone oxidoreductase subunit K.